A 109-amino-acid chain; its full sequence is Staphostatin B (109 aa).

Residues 97–101 are binds to staphopain B; the sequence is IGTSR.

Belongs to the protease inhibitor I57 (SspC) family. In terms of assembly, forms a stable non-covalent complex with prematurely activated/folded SspB.

It is found in the cytoplasm. Specifically inhibits the cysteine protease staphopain B (SspB) by blocking the active site of the enzyme. Probably required to protect cytoplasmic proteins from being degraded by prematurely activated/folded prostaphopain B. Also involved in growth capacity, viability and bacterial morphology. The polypeptide is Staphostatin B (sspC) (Staphylococcus aureus (strain Mu50 / ATCC 700699)).